Consider the following 354-residue polypeptide: Arginase-2, mitochondrial (354 aa).

A mitochondrion-targeting transit peptide spans 1 to 22; sequence MSLRSHLSRLLRTQVHSVRKKS. Mn(2+)-binding residues include histidine 120, aspartate 143, histidine 145, and aspartate 147. Substrate contacts are provided by residues 145–149, 156–158, and aspartate 202; these read HADIN and SGN. Mn(2+) contacts are provided by aspartate 251 and aspartate 253. Substrate contacts are provided by threonine 265 and glutamate 296. The disordered stretch occupies residues 332–354; it reads IVYDQLPTPSSPDESESEERVRI.

Belongs to the arginase family. In terms of assembly, homotrimer. Mn(2+) is required as a cofactor.

It is found in the mitochondrion. The enzyme catalyses L-arginine + H2O = urea + L-ornithine. The protein operates within nitrogen metabolism; urea cycle; L-ornithine and urea from L-arginine: step 1/1. In terms of biological role, may play a role in the regulation of extra-urea cycle arginine metabolism and also in down-regulation of nitric oxide synthesis. Extrahepatic arginase functions to regulate L-arginine bioavailability to nitric oxid synthase (NOS). Arginine metabolism is a critical regulator of innate and adaptive immune responses. Seems to be involved in negative regulation of the survival capacity of activated T cells. May suppress inflammation-related signaling in asthmatic airway epithelium. May play a role in promoting prenatal immune suppression. Regulates RPS6KB1 signaling, which promotes endothelial cell senescence and inflammation and implicates NOS3/eNOS dysfunction. Can inhibit endothelial autophagy independently of its enzymatic activity implicating mTORC2 signaling. Involved in vascular smooth muscle cell senescence and apoptosis independently of its enzymatic activity. The protein is Arginase-2, mitochondrial (ARG2) of Bos taurus (Bovine).